The sequence spans 229 residues: ATP-dependent dethiobiotin synthetase BioD (229 aa).

Residue 12–17 coordinates ATP; that stretch reads GVGKTV. Residue Thr-16 participates in Mg(2+) binding. Residue Lys-37 is part of the active site. Thr-41 provides a ligand contact to substrate. ATP is bound by residues Asp-53, 112–115, and 201–203; these read EGAG and PAG. Residues Asp-53 and Glu-112 each coordinate Mg(2+).

This sequence belongs to the dethiobiotin synthetase family. As to quaternary structure, homodimer. Mg(2+) is required as a cofactor.

Its subcellular location is the cytoplasm. The catalysed reaction is (7R,8S)-7,8-diammoniononanoate + CO2 + ATP = (4R,5S)-dethiobiotin + ADP + phosphate + 3 H(+). It participates in cofactor biosynthesis; biotin biosynthesis; biotin from 7,8-diaminononanoate: step 1/2. Its function is as follows. Catalyzes a mechanistically unusual reaction, the ATP-dependent insertion of CO2 between the N7 and N8 nitrogen atoms of 7,8-diaminopelargonic acid (DAPA, also called 7,8-diammoniononanoate) to form a ureido ring. In Mycobacterium sp. (strain JLS), this protein is ATP-dependent dethiobiotin synthetase BioD.